The primary structure comprises 727 residues: Catalase-peroxidase (727 aa).

The disordered stretch occupies residues 1-24; sequence MDQKSDSAGKCPVAHTAPRGRSNR. A cross-link (tryptophyl-tyrosyl-methioninium (Trp-Tyr) (with M-243)) is located at residues 95 to 217; sequence WHSAGTYRIT…LAAVQMGLIY (123 aa). The active-site Proton acceptor is the His-96. A cross-link (tryptophyl-tyrosyl-methioninium (Tyr-Met) (with W-95)) is located at residues 217-243; sequence YVNPEGPNGNPDPVAAARDIRETFARM. His-258 contacts heme b.

This sequence belongs to the peroxidase family. Peroxidase/catalase subfamily. As to quaternary structure, homodimer or homotetramer. The cofactor is heme b. Post-translationally, formation of the three residue Trp-Tyr-Met cross-link is important for the catalase, but not the peroxidase activity of the enzyme.

It carries out the reaction H2O2 + AH2 = A + 2 H2O. The catalysed reaction is 2 H2O2 = O2 + 2 H2O. In terms of biological role, bifunctional enzyme with both catalase and broad-spectrum peroxidase activity. The polypeptide is Catalase-peroxidase (Rhizobium meliloti (strain 1021) (Ensifer meliloti)).